The chain runs to 87 residues: Neutrophil antibiotic peptide NP-3A (87 aa).

Positions 1–19 are cleaved as a signal peptide; it reads MRTLTLLTTLLLLALHTQA. Residues 20–58 constitute a propeptide that is removed on maturation; it reads ESPQGSTKEAPDEEQDISVFFGGDKGTALQDAAVKAGVT. Disulfide bonds link Cys-59–Cys-87, Cys-61–Cys-76, and Cys-66–Cys-86.

This sequence belongs to the alpha-defensin family. In terms of tissue distribution, highest expression in bone marrow and to a much lesser extent in small intestine.

It localises to the secreted. Its function is as follows. Active in vitro against S.aureus, fungi, Gram-positive and Gram-negative bacteria and to a lesser extent against an enveloped virus. This Rattus norvegicus (Rat) protein is Neutrophil antibiotic peptide NP-3A.